Reading from the N-terminus, the 229-residue chain is Potassium/proton antiporter CemA (229 aa).

The next 4 helical transmembrane spans lie at 7–27 (FTPLPYLASIVFLPWWISFSF), 114–134 (IISFAILSGYSILGNEELVVL), 154–174 (ILLLTDLCIGFHSPHGWELMI), and 189–209 (IISGLVSTFPVILDTIFKYWI).

The protein belongs to the CemA family.

The protein resides in the plastid. Its subcellular location is the chloroplast inner membrane. The enzyme catalyses K(+)(in) + H(+)(out) = K(+)(out) + H(+)(in). Contributes to K(+)/H(+) antiport activity by supporting proton efflux to control proton extrusion and homeostasis in chloroplasts in a light-dependent manner to modulate photosynthesis. Prevents excessive induction of non-photochemical quenching (NPQ) under continuous-light conditions. Indirectly promotes efficient inorganic carbon uptake into chloroplasts. In Nandina domestica (Heavenly bamboo), this protein is Potassium/proton antiporter CemA.